Reading from the N-terminus, the 503-residue chain is Maturase K (503 aa).

It belongs to the intron maturase 2 family. MatK subfamily.

It is found in the plastid. The protein resides in the chloroplast. Usually encoded in the trnK tRNA gene intron. Probably assists in splicing its own and other chloroplast group II introns. This is Maturase K from Psilotum nudum (Whisk fern).